The primary structure comprises 378 residues: Chaperone protein DnaJ (378 aa).

Residues 5 to 69 (EFYDRLGVSK…QKRAAYDQYG (65 aa)) form the J domain. Residues 135 to 217 (GTEKEVKYHR…CHGTGHEKQA (83 aa)) form a CR-type zinc finger. The Zn(2+) site is built by Cys148, Cys151, Cys165, Cys168, Cys191, Cys194, Cys205, and Cys208. CXXCXGXG motif repeat units follow at residues 148–155 (CRTCNGSG), 165–172 (CGRCHGAG), 191–198 (CDVCHGRG), and 205–212 (CTTCHGTG).

This sequence belongs to the DnaJ family. In terms of assembly, homodimer. Requires Zn(2+) as cofactor.

Its subcellular location is the cytoplasm. Participates actively in the response to hyperosmotic and heat shock by preventing the aggregation of stress-denatured proteins and by disaggregating proteins, also in an autonomous, DnaK-independent fashion. Unfolded proteins bind initially to DnaJ; upon interaction with the DnaJ-bound protein, DnaK hydrolyzes its bound ATP, resulting in the formation of a stable complex. GrpE releases ADP from DnaK; ATP binding to DnaK triggers the release of the substrate protein, thus completing the reaction cycle. Several rounds of ATP-dependent interactions between DnaJ, DnaK and GrpE are required for fully efficient folding. Also involved, together with DnaK and GrpE, in the DNA replication of plasmids through activation of initiation proteins. This Streptococcus pneumoniae serotype 4 (strain ATCC BAA-334 / TIGR4) protein is Chaperone protein DnaJ.